A 208-amino-acid polypeptide reads, in one-letter code: Probable GTP-binding protein EngB (208 aa).

Positions 23–205 (LTSEMVILGR…RQTLLKYLLT (183 aa)) constitute an EngB-type G domain. GTP-binding positions include 31–38 (GRSNVGKS), 57–61 (GKTRL), 84–87 (DLPG), 154–157 (TKFD), and 182–184 (FNA). Positions 38 and 59 each coordinate Mg(2+).

It belongs to the TRAFAC class TrmE-Era-EngA-EngB-Septin-like GTPase superfamily. EngB GTPase family. Mg(2+) serves as cofactor.

Its function is as follows. Necessary for normal cell division and for the maintenance of normal septation. The chain is Probable GTP-binding protein EngB from Helicobacter pylori (strain G27).